A 587-amino-acid polypeptide reads, in one-letter code: Lipoprotein LpqB (587 aa).

Positions methionine 1–glycine 19 are cleaved as a signal peptide. A lipid anchor (N-palmitoyl cysteine) is attached at cysteine 20. The S-diacylglycerol cysteine moiety is linked to residue cysteine 20.

This sequence belongs to the LpqB lipoprotein family.

Its subcellular location is the cell membrane. The chain is Lipoprotein LpqB from Mycobacterium bovis (strain ATCC BAA-935 / AF2122/97).